A 564-amino-acid chain; its full sequence is Plant UBX domain-containing protein 8 (564 aa).

An N-acetylalanine modification is found at Ala-2. Residues Ala-2 to Glu-44 enclose the UBA-like domain. UIM domains are found at residues Ile-198–Ser-217 and Glu-230–Glu-249. The disordered stretch occupies residues Ser-210–Met-229. Disordered stretches follow at residues Ala-267–Asp-358, Ile-371–Met-423, and Phe-443–Glu-483. Over residues Phe-291–Glu-300 the composition is skewed to acidic residues. Phosphoserine is present on residues Ser-295, Ser-324, Ser-326, and Ser-328. The segment covering Asp-322–Ala-334 has biased composition (basic and acidic residues). The segment covering Phe-381–Pro-395 has biased composition (pro residues). The stretch at Val-412–Glu-478 forms a coiled coil. Positions Phe-443 to Leu-475 are enriched in basic and acidic residues. One can recognise a UBX domain in the interval Asp-482–Phe-560.

Interacts with RABA5C/ARA-4.

The protein is Plant UBX domain-containing protein 8 of Arabidopsis thaliana (Mouse-ear cress).